The following is a 194-amino-acid chain: MSSILIAVIAIAALALVFGLILGFASIKFKVESDPIVEQIDAILPQTQCGQCGYPGCKPYAEAIANGDMINKCPPGGQATIEKLADLMGVDVPSSAHDEEKSIKKVAFIHEDMCIGCTKCIQACPVDAIVGGTKALHTVIESECTGCDLCVAPCPTDCIEMIPVKTTPDNWKWDLNTIPVVNISTDQPSKSSEL.

The hydrophobic stretch occupies residues 1 to 26 (MSSILIAVIAIAALALVFGLILGFAS). The 59-residue stretch at 32–90 (ESDPIVEQIDAILPQTQCGQCGYPGCKPYAEAIANGDMINKCPPGGQATIEKLADLMGV) folds into the 4Fe-4S domain. 12 residues coordinate [4Fe-4S] cluster: Cys49, Cys52, Cys57, Cys73, Cys114, Cys117, Cys120, Cys124, Cys144, Cys147, Cys150, and Cys154. 4Fe-4S ferredoxin-type domains are found at residues 105 to 134 (KVAF…GGTK) and 135 to 164 (ALHT…MIPV).

Belongs to the 4Fe4S bacterial-type ferredoxin family. RnfB subfamily. In terms of assembly, the complex is composed of six subunits: RnfA, RnfB, RnfC, RnfD, RnfE and RnfG. [4Fe-4S] cluster serves as cofactor.

It localises to the cell inner membrane. Its function is as follows. Part of a membrane-bound complex that couples electron transfer with translocation of ions across the membrane. This is Ion-translocating oxidoreductase complex subunit B from Aliivibrio fischeri (strain ATCC 700601 / ES114) (Vibrio fischeri).